The sequence spans 216 residues: Adenylate kinase (216 aa).

10 to 15 (GSGKGT) provides a ligand contact to ATP. The interval 30–59 (STGEILRKEIKKNKKTKKYIKKTINKGKLI) is NMP. Residues threonine 31, arginine 36, 57–59 (KLI), 85–88 (GFPR), and glutamine 92 each bind AMP. An LID region spans residues 121–158 (GRLIHASSGRTYHKIFNPPKIKNKDDITQEKLCSRNDD). Residues arginine 122 and 131-132 (TY) each bind ATP. Positions 155 and 166 each coordinate AMP. Residue glutamine 196 coordinates ATP.

This sequence belongs to the adenylate kinase family. In terms of assembly, monomer.

The protein resides in the cytoplasm. It carries out the reaction AMP + ATP = 2 ADP. It functions in the pathway purine metabolism; AMP biosynthesis via salvage pathway; AMP from ADP: step 1/1. In terms of biological role, catalyzes the reversible transfer of the terminal phosphate group between ATP and AMP. Plays an important role in cellular energy homeostasis and in adenine nucleotide metabolism. The protein is Adenylate kinase of Buchnera aphidicola subsp. Cinara cedri (strain Cc).